A 395-amino-acid chain; its full sequence is Putative phosphatidate cytidylyltransferase (395 aa).

Transmembrane regions (helical) follow at residues 13-33, 78-98, 115-135, 144-164, 177-197, 201-221, 242-262, 306-326, and 358-378; these read STVF…SAFA, FAFG…MNWE, SLLS…VIYF, WIWT…YMIS, IYSL…YFSV, WTTI…AYLF, AFFG…LYSI, FYIY…IFAI, and FDSS…AGIS.

The protein belongs to the CDS family.

It is found in the cell membrane. The enzyme catalyses a 1,2-diacyl-sn-glycero-3-phosphate + CTP + H(+) = a CDP-1,2-diacyl-sn-glycerol + diphosphate. Its pathway is phospholipid metabolism; CDP-diacylglycerol biosynthesis; CDP-diacylglycerol from sn-glycerol 3-phosphate: step 3/3. The chain is Putative phosphatidate cytidylyltransferase (cdsA) from Mycoplasma pneumoniae (strain ATCC 29342 / M129 / Subtype 1) (Mycoplasmoides pneumoniae).